The following is a 422-amino-acid chain: Immunoglobulin mu Fc receptor (422 aa).

An N-terminal signal peptide occupies residues 1 to 16 (MDFWLWLLYFLPVSGA). The Extracellular segment spans residues 18-262 (RVLPEVQLNV…DRGLHIPIPE (245 aa)). Residues 24–121 (QLNVEWGGSI…GKTQKITLNV (98 aa)) form the Ig-like domain. 2 disulfide bridges follow: Cys37–Cys103 and Cys49–Cys58. Thr91 is subject to Phosphothreonine. A helical transmembrane segment spans residues 263 to 283 (FHILIPTFLGFLLLVLLGLVV). At 284 to 422 (KRAIQRRRAS…YAPGPRSSCP (139 aa)) the chain is on the cytoplasmic side. Positions 290–308 (RRASSRRAGRLAMRRRGRG) are enriched in basic residues. Disordered stretches follow at residues 290–367 (RRAS…QVLE) and 391–422 (VNLEDPDSDDYINIPDPSHLPSYAPGPRSSCP). Over residues 344–363 (LGPAEAPLLNAPASASPASP) the composition is skewed to low complexity.

In terms of assembly, interacts (via Ig-like domain) with IGHM (via CH4/Cmu4 domain), both secreted and membrane-bound IgM; the interaction is glycan-independent and multivalent theoretically involving up to eight binding sites for the IgM pentamer. Phosphorylated on both Tyr and Ser residues. In terms of processing, O-glycosylated. Sialylated. O-linked glycans regulate trafficking to the plasma membrane. As to expression, expressed in pre-B cells, immature and mature B cells residing in primary and secondary lymphoid organs (at protein level). In the spleen, highly expressed in follicular and marginal zone B cells and at lower levels in germinal center B cells and plasma cells. Expressed in splenic dendritic cells and in granulocytes. In the peritoneum, expressed in B1-a and B-2 cell lineages. In the bone marrow, expressed in immature B cells and at a lower level in pro- and pre-B cells (at protein level). Expressed in M cells (at protein level).

It localises to the cell membrane. The protein resides in the early endosome membrane. It is found in the golgi apparatus. Its subcellular location is the trans-Golgi network membrane. The protein localises to the lysosome membrane. Functionally, high-affinity Fc receptor for immunoglobulin M (IgM), both secreted and membrane-bound IgM. Primarily regulates IgM transport and homeostasis. In lymphoid cells, enables exocytosis of membrane-bound IgM on the plasma membrane as well as endocytosis of IgM-antigen complexes toward lysosomes for degradation. In mucosal epithelium, mediates retrotranscytosis of antigen-IgM complexes across mucosal M cells toward antigen-presenting cells in mucosal lymphoid tissues. Triggers costimulatory signaling and mediates most of IgM effector functions involved in B cell development and primary immune response to infection. Likely limits tonic IgM BCR signaling to self-antigens for proper negative selection of autoreactive B cells in the bone marrow and for the maintenance of regulatory B cell pool in peripheral lymphoid organs. Mediates antibody responses to T cell-dependent and T cell-independent antigens and promotes induction of an efficient neutralizing IgG response. Engages in cross-talk with antigen-receptor signaling via the non-canonical NF-kappa-B, MAP kinases and calcium signaling pathways. This chain is Immunoglobulin mu Fc receptor, found in Mus musculus (Mouse).